The sequence spans 98 residues: C-X-C motif chemokine 10 (98 aa).

The signal sequence occupies residues 1–21 (MNQSAVLIFCLIFLTLNGTQG). Arginine 26 carries the post-translational modification Citrulline. Cystine bridges form between cysteine 30/cysteine 57 and cysteine 32/cysteine 74.

Belongs to the intercrine alpha (chemokine CxC) family. Monomer, dimer, and tetramer. Interacts with CXCR3 (via N-terminus).

The protein resides in the secreted. Pro-inflammatory cytokine that is involved in a wide variety of processes such as chemotaxis, differentiation, and activation of peripheral immune cells, regulation of cell growth, apoptosis and modulation of angiostatic effects. Plays thereby an important role during viral infections by stimulating the activation and migration of immune cells to the infected sites. Mechanistically, binding of CXCL10 to the CXCR3 receptor activates G protein-mediated signaling and results in downstream activation of phospholipase C-dependent pathway, an increase in intracellular calcium production and actin reorganization. In turn, recruitment of activated Th1 lymphocytes occurs at sites of inflammation. Activation of the CXCL10/CXCR3 axis also plays an important role in neurons in response to brain injury for activating microglia, the resident macrophage population of the central nervous system, and directing them to the lesion site. This recruitment is an essential element for neuronal reorganization. This Canis lupus familiaris (Dog) protein is C-X-C motif chemokine 10 (CXCL10).